Here is a 62-residue protein sequence, read N- to C-terminus: Large ribosomal subunit protein bL32 (62 aa).

The span at 1 to 19 (MPNPKRRHSKARTGNRRAH) shows a compositional bias: basic residues. The tract at residues 1–23 (MPNPKRRHSKARTGNRRAHDHLS) is disordered.

The protein belongs to the bacterial ribosomal protein bL32 family.

The protein is Large ribosomal subunit protein bL32 of Koribacter versatilis (strain Ellin345).